A 241-amino-acid polypeptide reads, in one-letter code: Transcriptional regulatory protein SrrA (241 aa).

One can recognise a Response regulatory domain in the interval 4 to 117 (EILIVDDEDR…EVVLRVKALL (114 aa)). At Asp-53 the chain carries 4-aspartylphosphate. A DNA-binding region (ompR/PhoB-type) is located at residues 133–233 (RDVIEFKHLE…VWGVGYKFEV (101 aa)).

Phosphorylated by SrrB.

Its subcellular location is the cytoplasm. Its function is as follows. Member of the two-component regulatory system SrrA/SrrB, which is involved in the global regulation of staphylococcal virulence factors in response to environmental oxygen levels as well as biofilm formation. Also plays an essential role in host-derived nitric oxide resistance by regulating hmp/flavohemoglobin, an enzyme that detoxifies nitric oxide by converting it to nitrate. Functions as a transcription regulator by direct binding to promoter regions of target genes. In Staphylococcus aureus (strain NCTC 8325 / PS 47), this protein is Transcriptional regulatory protein SrrA (srrA).